The following is an 867-amino-acid chain: Leucine--tRNA ligase (867 aa).

The short motif at 57–67 (PYPSGTLHMGH) is the 'HIGH' region element. Positions 308-327 (SQDERTSDDQPKRGVPTGAV) are disordered. Residues 309–319 (QDERTSDDQPK) are compositionally biased toward basic and acidic residues. Residues 631–635 (KMSKS) carry the 'KMSKS' region motif. Position 634 (Lys634) interacts with ATP.

It belongs to the class-I aminoacyl-tRNA synthetase family.

The protein localises to the cytoplasm. The catalysed reaction is tRNA(Leu) + L-leucine + ATP = L-leucyl-tRNA(Leu) + AMP + diphosphate. This Synechococcus sp. (strain CC9311) protein is Leucine--tRNA ligase.